A 258-amino-acid polypeptide reads, in one-letter code: Imidazole glycerol phosphate synthase subunit HisF (258 aa).

Catalysis depends on residues aspartate 11 and aspartate 130.

It belongs to the HisA/HisF family. Heterodimer of HisH and HisF.

It localises to the cytoplasm. The enzyme catalyses 5-[(5-phospho-1-deoxy-D-ribulos-1-ylimino)methylamino]-1-(5-phospho-beta-D-ribosyl)imidazole-4-carboxamide + L-glutamine = D-erythro-1-(imidazol-4-yl)glycerol 3-phosphate + 5-amino-1-(5-phospho-beta-D-ribosyl)imidazole-4-carboxamide + L-glutamate + H(+). The protein operates within amino-acid biosynthesis; L-histidine biosynthesis; L-histidine from 5-phospho-alpha-D-ribose 1-diphosphate: step 5/9. Its function is as follows. IGPS catalyzes the conversion of PRFAR and glutamine to IGP, AICAR and glutamate. The HisF subunit catalyzes the cyclization activity that produces IGP and AICAR from PRFAR using the ammonia provided by the HisH subunit. The protein is Imidazole glycerol phosphate synthase subunit HisF of Escherichia coli O1:K1 / APEC.